We begin with the raw amino-acid sequence, 212 residues long: Leucyl/phenylalanyl-tRNA--protein transferase (212 aa).

It belongs to the L/F-transferase family.

Its subcellular location is the cytoplasm. It carries out the reaction N-terminal L-lysyl-[protein] + L-leucyl-tRNA(Leu) = N-terminal L-leucyl-L-lysyl-[protein] + tRNA(Leu) + H(+). It catalyses the reaction N-terminal L-arginyl-[protein] + L-leucyl-tRNA(Leu) = N-terminal L-leucyl-L-arginyl-[protein] + tRNA(Leu) + H(+). The enzyme catalyses L-phenylalanyl-tRNA(Phe) + an N-terminal L-alpha-aminoacyl-[protein] = an N-terminal L-phenylalanyl-L-alpha-aminoacyl-[protein] + tRNA(Phe). In terms of biological role, functions in the N-end rule pathway of protein degradation where it conjugates Leu, Phe and, less efficiently, Met from aminoacyl-tRNAs to the N-termini of proteins containing an N-terminal arginine or lysine. The polypeptide is Leucyl/phenylalanyl-tRNA--protein transferase (Jannaschia sp. (strain CCS1)).